A 436-amino-acid polypeptide reads, in one-letter code: Serine protease hepsin (436 aa).

A disordered region spans residues 1 to 29 (MAKEDEEPGAHRGGSTCSRPQPGKGGRTA). At 1-38 (MAKEDEEPGAHRGGSTCSRPQPGKGGRTAACCSRPKVA) the chain is on the cytoplasmic side. The chain crosses the membrane as a helical; Signal-anchor for type II membrane protein span at residues 39 to 59 (ALIVGTLLFLTGIGAASWAIV). The Extracellular portion of the chain corresponds to 60–436 (TILLQSDQEP…SEASGMVTQP (377 aa)). The SRCR domain maps to 73–170 (VQLSPGDSRL…RGRFLTATCQ (98 aa)). Cystine bridges form between Cys-96–Cys-159, Cys-109–Cys-169, Cys-138–Cys-157, Cys-172–Cys-296, Cys-207–Cys-223, Cys-310–Cys-378, Cys-341–Cys-357, and Cys-368–Cys-400. Asn-131 is a glycosylation site (N-linked (GlcNAc...) asparagine). A Peptidase S1 domain is found at 182 to 424 (IVGGQDSSLG…FREWIFKAIK (243 aa)). Active-site charge relay system residues include His-222 and Asp-276. Ser-372 functions as the Charge relay system in the catalytic mechanism.

This sequence belongs to the peptidase S1 family. In terms of tissue distribution, detected in kidney, in thick ascending tubule epithelial cells (at protein level). Detected in kidney and liver.

The protein localises to the apical cell membrane. It localises to the cell membrane. It is found in the secreted. It catalyses the reaction Cleavage after basic amino-acid residues, with Arg strongly preferred to Lys.. Serine protease that cleaves extracellular substrates, and contributes to the proteolytic processing of growth factors, such as HGF and MST1/HGFL. Plays a role in cell growth and maintenance of cell morphology. Plays a role in the proteolytic processing of ACE2. Mediates the proteolytic cleavage of urinary UMOD that is required for UMOD polymerization. The protein is Serine protease hepsin (Hpn) of Mus musculus (Mouse).